The sequence spans 170 residues: Odorant-binding protein 2b (170 aa).

The signal sequence occupies residues M1–A15. C74 and C166 are disulfide-bonded.

This sequence belongs to the calycin superfamily. Lipocalin family. Strongly expressed in genital sphere organs such as the prostate and mammary glands.

The protein resides in the secreted. Probably binds and transports small hydrophobic volatile molecules. The protein is Odorant-binding protein 2b (OBP2B) of Homo sapiens (Human).